We begin with the raw amino-acid sequence, 637 residues long: MHGLLLAATLLSLPFNAVAHVPPTTGLVRRGVDLDSFRLNERSQFKISEQVEKDSGVSALHSRNYVDVATRLVKRVAPKATFRLVDDHYIGDTGVGHVYFRQTINGVDVDNGDFNVNIGRNGRVFSYGNSFHTGDVPESNLRVKEDPSNPVQALHGALKALRIPIKAERAVAEATNEEDDEDFVLKGTSGALADPTAKLVYLMKNDGSLALTWRVETDIGDNWLLTYVDAEDTTKVHNVVDYVAHATYKVYRWGIADPTEGELEVISDPWNLRTSEFTWHGNGTTRFSTTIGNNGIAQSNPTGGSEYLNNYRPQPADLKFEYDYSPSMNPPSTYIDASITQLWYSANTYHDLLYMLGFNERSGNFETNNNNQGGKGNDYVILNAQDGSGTNNANFATPPDGRPGRMRMYIWTRANPPRDVCFEEGTVVHEYTHGLSNRLTGGPANSRCLNALESGGMGEGWSDFFATAVRLKPKDTRHTDYPKGAWVANNPRGVRQYVYSTNMTTNPLVYTTVNSLNQVHAIGTVWATILYEVLWNLIDKHGKNDGPTPKFRNGVPTDGKYLAMKLVLDGLALQPCNPNFVQARDAILDADKILTGGRNQCELWKGFAKRELGTGAKWDPRNRVGSTRVPVICRIFT.

A signal peptide spans 1–19; sequence MHGLLLAATLLSLPFNAVA. Positions 20-245 are excised as a propeptide; it reads HVPPTTGLVR…VHNVVDYVAH (226 aa). An N-linked (GlcNAc...) asparagine glycan is attached at Asn282. His429 lines the Zn(2+) pocket. Glu430 is an active-site residue. Residue His433 coordinates Zn(2+). The N-linked (GlcNAc...) asparagine glycan is linked to Asn502.

This sequence belongs to the peptidase M36 family. The cofactor is Zn(2+).

It is found in the secreted. In terms of biological role, secreted metalloproteinase that allows assimilation of proteinaceous substrates. The sequence is that of Extracellular metalloproteinase 10 (MEP10) from Uncinocarpus reesii (strain UAMH 1704).